The chain runs to 299 residues: CCR4-NOT transcription complex subunit 9 (299 aa).

Residue Met1 is modified to N-acetylmethionine.

It belongs to the CNOT9 family. In terms of assembly, homodimer. Component of the CCR4-NOT complex; distinct complexes seem to exist that differ in the participation of probably mutually exclusive catalytic subunits. Interacts with MYB, ATF2, RARA, RARB, RARG, RXRA, RXRB and RXRG. Identified in a complex with ATF2 bound to target DNA. Interacts with NANOS2. Directly interacts with ZNF335. In terms of tissue distribution, detected in spleen, thymus, prostate, testis, ovary and intestine.

It localises to the nucleus. The protein localises to the cytoplasm. It is found in the P-body. Component of the CCR4-NOT complex which is one of the major cellular mRNA deadenylases and is linked to various cellular processes including bulk mRNA degradation, miRNA-mediated repression, translational repression during translational initiation and general transcription regulation. Additional complex functions may be a consequence of its influence on mRNA expression. Involved in down-regulation of MYB- and JUN-dependent transcription. May play a role in cell differentiation. Can bind oligonucleotides, such as poly-G, poly-C or poly-T (in vitro), but the physiological relevance of this is not certain. Does not bind poly-A. Enhances ligand-dependent transcriptional activity of nuclear hormone receptors, including RARA, expect ESR1-mediated transcription that is not only slightly increased, if at all. The protein is CCR4-NOT transcription complex subunit 9 of Homo sapiens (Human).